The chain runs to 161 residues: Transcriptional repressor NrdR (161 aa).

A zinc finger spans residues 3 to 34 (CPFCGKYDTKVTDSRLVAEGDQVRRRRQCNDC). Positions 49 to 139 (PRVIKGDGSR…VYRRFQDLDE (91 aa)) constitute an ATP-cone domain.

This sequence belongs to the NrdR family. It depends on Zn(2+) as a cofactor.

In terms of biological role, negatively regulates transcription of bacterial ribonucleotide reductase nrd genes and operons by binding to NrdR-boxes. This Chromohalobacter salexigens (strain ATCC BAA-138 / DSM 3043 / CIP 106854 / NCIMB 13768 / 1H11) protein is Transcriptional repressor NrdR.